The sequence spans 477 residues: Glutamate--tRNA ligase (477 aa).

Residues 18–28 carry the 'HIGH' region motif; sequence PSPTGFIHLGN. The span at 128–138 shows a compositional bias: basic and acidic residues; that stretch reads PRYDGSWRPEP. The segment at 128–151 is disordered; sequence PRYDGSWRPEPGKTLPPVPAGMSP. The short motif at 250-254 is the 'KMSKS' region element; it reads KLSKR. Lys-253 serves as a coordination point for ATP.

This sequence belongs to the class-I aminoacyl-tRNA synthetase family. Glutamate--tRNA ligase type 1 subfamily. Monomer.

It localises to the cytoplasm. It catalyses the reaction tRNA(Glu) + L-glutamate + ATP = L-glutamyl-tRNA(Glu) + AMP + diphosphate. Its function is as follows. Catalyzes the attachment of glutamate to tRNA(Glu) in a two-step reaction: glutamate is first activated by ATP to form Glu-AMP and then transferred to the acceptor end of tRNA(Glu). The sequence is that of Glutamate--tRNA ligase from Verminephrobacter eiseniae (strain EF01-2).